Here is a 414-residue protein sequence, read N- to C-terminus: 2,3-diketo-5-methylthiopentyl-1-phosphate enolase (414 aa).

Residue Lys-99 is the Proton acceptor of the active site. Substrate contacts are provided by residues Lys-148, 174–177, His-265, Gly-338, and 360–361; these read KDDE and GG. 3 residues coordinate Mg(2+): Lys-174, Asp-176, and Glu-177. Lys-174 carries the N6-carboxylysine modification.

This sequence belongs to the RuBisCO large chain family. Type IV subfamily. Homodimer. The cofactor is Mg(2+).

The catalysed reaction is 5-methylsulfanyl-2,3-dioxopentyl phosphate = 2-hydroxy-5-methylsulfanyl-3-oxopent-1-enyl phosphate. The protein operates within amino-acid biosynthesis; L-methionine biosynthesis via salvage pathway; L-methionine from S-methyl-5-thio-alpha-D-ribose 1-phosphate: step 3/6. Functionally, catalyzes the enolization of 2,3-diketo-5-methylthiopentyl-1-phosphate (DK-MTP-1-P) into 2-hydroxy-3-keto-5-methylthiopentenyl-1-phosphate (HK-MTPenyl-1-P). The polypeptide is 2,3-diketo-5-methylthiopentyl-1-phosphate enolase (Bacillus thuringiensis (strain Al Hakam)).